The primary structure comprises 142 residues: ATP synthase F(0) complex subunit C3, mitochondrial (142 aa).

The N-terminal 67 residues, 1-67 (MFACAKLACT…REFQTSAISR (67 aa)), are a transit peptide targeting the mitochondrion. Residues 83 to 103 (VGVAGSGAGIGTVFGSLIIGY) traverse the membrane as a helical segment. The residue at position 110 (Lys-110) is an N6,N6,N6-trimethyllysine. A helical membrane pass occupies residues 118 to 138 (ILGFALSEAMGLFCLMVAFLI).

Belongs to the ATPase C chain family. As to quaternary structure, F-type ATPases have 2 components, CF(1) - the catalytic core - and CF(0) - the membrane proton channel. CF(1) has five subunits: alpha(3), beta(3), gamma(1), delta(1), epsilon(1). CF(0) has three main subunits: a, b and c. Interacts with TMEM70 and TMEM242. Post-translationally, trimethylated by ATPSCKMT at Lys-110. Methylation is required for proper incorporation of the C subunit into the ATP synthase complex and mitochondrial respiration.

It localises to the mitochondrion membrane. Functionally, mitochondrial membrane ATP synthase (F(1)F(0) ATP synthase or Complex V) produces ATP from ADP in the presence of a proton gradient across the membrane which is generated by electron transport complexes of the respiratory chain. F-type ATPases consist of two structural domains, F(1) - containing the extramembraneous catalytic core and F(0) - containing the membrane proton channel, linked together by a central stalk and a peripheral stalk. During catalysis, ATP synthesis in the catalytic domain of F(1) is coupled via a rotary mechanism of the central stalk subunits to proton translocation. Part of the complex F(0) domain. A homomeric c-ring of probably 10 subunits is part of the complex rotary element. The chain is ATP synthase F(0) complex subunit C3, mitochondrial from Pongo abelii (Sumatran orangutan).